Consider the following 107-residue polypeptide: uncharacterized protein (107 aa).

Residues 9–31 (AAAIITAPTILAMMSTVLRALIF) form a helical membrane-spanning segment.

The protein localises to the membrane. This is an uncharacterized protein from Archaeoglobus fulgidus (strain ATCC 49558 / DSM 4304 / JCM 9628 / NBRC 100126 / VC-16).